The chain runs to 1925 residues: Plexin-D1 (1925 aa).

Low complexity predominate over residues 1–18 (MAPRAAGGAPLSARAAAA). The interval 1-23 (MAPRAAGGAPLSARAAAASPPPF) is disordered. The first 46 residues, 1 to 46 (MAPRAAGGAPLSARAAAASPPPFQTPPRCPVPLLLLLLLGAARAGA), serve as a signal peptide directing secretion. Positions 47–546 (LEIQRRFPSP…TSHQMARVKV (500 aa)) constitute a Sema domain. Residues 47–1271 (LEIQRRFPSP…TLQLGGSETA (1225 aa)) lie on the Extracellular side of the membrane. N-linked (GlcNAc...) asparagine glycosylation occurs at asparagine 86. 2 disulfides stabilise this stretch: cysteine 104–cysteine 114 and cysteine 140–cysteine 148. 3 N-linked (GlcNAc...) asparagine glycosylation sites follow: asparagine 155, asparagine 188, and asparagine 224. 2 cysteine pairs are disulfide-bonded: cysteine 322–cysteine 445 and cysteine 345–cysteine 389. Asparagine 481 and asparagine 500 each carry an N-linked (GlcNAc...) asparagine glycan. Intrachain disulfides connect cysteine 549-cysteine 566, cysteine 555-cysteine 600, cysteine 558-cysteine 575, cysteine 569-cysteine 581, and cysteine 637-cysteine 661. Asparagine 583 is a glycosylation site (N-linked (GlcNAc...) asparagine). Asparagine 696, asparagine 736, asparagine 802, asparagine 965, asparagine 1017, asparagine 1060, asparagine 1099, asparagine 1118, asparagine 1132, asparagine 1237, and asparagine 1257 each carry an N-linked (GlcNAc...) asparagine glycan. IPT/TIG domains lie at 891–979 (PEIH…FSYV), 981–1066 (PLVH…FWYM), and 1069–1160 (PVIT…LDPE). Residues 1272 to 1292 (IIVSIVICSVLLLLSVVALFV) traverse the membrane as a helical segment. The Cytoplasmic segment spans residues 1293 to 1925 (FCTKSRRAER…DNIYECYSEA (633 aa)).

It belongs to the plexin family. In terms of assembly, interacts with NRP1 and SEMA4A. Interacts with SH3BP1; they dissociate upon SEMA3E binding to PLXND1 allowing SH3BP1 to transduce downstream signal through RAC1 inactivation. Detected at low levels in heart, placenta, lung, skeletal muscle, kidney, thymus and liver. Detected at very low levels in brain, colon, spleen, small intestine and peripheral blood leukocytes.

The protein localises to the cell membrane. It is found in the cell projection. The protein resides in the lamellipodium membrane. Cell surface receptor for SEMA4A and for class 3 semaphorins, such as SEMA3A, SEMA3C and SEMA3E. Plays an important role in cell-cell signaling, and in regulating the migration of a wide spectrum of cell types. Regulates the migration of thymocytes in the medulla. Regulates endothelial cell migration. Plays an important role in ensuring the specificity of synapse formation. Required for normal development of the heart and vasculature. Mediates anti-angiogenic signaling in response to SEMA3E. This chain is Plexin-D1 (PLXND1), found in Homo sapiens (Human).